The chain runs to 408 residues: Phosphatidylinositol transfer protein CSR1 (408 aa).

S2 carries the post-translational modification N-acetylserine. S2 bears the Phosphoserine mark. In terms of domain architecture, CRAL-TRIO spans E157–L317.

The protein belongs to the PITP family. Forms a complex with 2 TSA2 subunits. Binds phosphatidylinositol (PtdIns).

It is found in the cytoplasm. The protein resides in the microsome. The protein localises to the endosome. The enzyme catalyses a 1,2-diacyl-sn-glycero-3-phospho-(1D-myo-inositol)(in) = a 1,2-diacyl-sn-glycero-3-phospho-(1D-myo-inositol)(out). Non-classical phosphatidylinositol (PtdIns) transfer protein (PITP), which exhibits PtdIns-binding/transfer activity in the absence of detectable PtdCho-binding/transfer activity. Activates SPO14/PLD1 (phospholipase D1) by stimulating phosphoinositide synthesis via the STT4 PtdIns 4-kinase. Modulates ArfGAP function through effects on SPO14 activity. Inhibits phosphatidylcholine degradation by PLB1 (phospholipase B1). May also regulate post-Golgi membrane-trafficking events and have a role resistance to oxidative stress. Inhibits fatty acid synthase activity in response to heme depletion and oleic acid starvation, preventing saturated fatty acid (SFA) accumulation. This is Phosphatidylinositol transfer protein CSR1 (CSR1) from Saccharomyces cerevisiae (strain ATCC 204508 / S288c) (Baker's yeast).